We begin with the raw amino-acid sequence, 255 residues long: Sushi domain-containing protein 3 (255 aa).

A disordered region spans residues 1-25 (MRWAAATLRGKARPRGRAGVTTPAP). Residues 1–103 (MRWAAATLRG…VPPHETFGFK (103 aa)) are Extracellular-facing. N-linked (GlcNAc...) asparagine glycosylation is present at Asn-27. Residues 30 to 93 (GTCAKLRLPP…WSSGSPVCKL (64 aa)) enclose the Sushi domain. 2 disulfide bridges follow: Cys-32–Cys-75 and Cys-61–Cys-91. The chain crosses the membrane as a helical span at residues 104 to 124 (VAVIASIVSCAIILLMSMAFL). Over 125–255 (TCCLLKCVKK…PQQPAAYALG (131 aa)) the chain is Cytoplasmic. Positions 173–255 (SGPSQAHDNH…PQQPAAYALG (83 aa)) are disordered. Residues 179-191 (HDNHSFTTDHGES) show a composition bias toward basic and acidic residues.

As to expression, highly expressed in estrogen receptor-positive breast tumors.

It localises to the cell membrane. Functionally, may play a role in breast tumorigenesis by promoting estrogen-dependent cell proliferation, cell-cell interactions and migration. The protein is Sushi domain-containing protein 3 (SUSD3) of Homo sapiens (Human).